The chain runs to 411 residues: Exodeoxyribonuclease 7 large subunit (411 aa).

The protein belongs to the XseA family. Heterooligomer composed of large and small subunits.

It localises to the cytoplasm. It catalyses the reaction Exonucleolytic cleavage in either 5'- to 3'- or 3'- to 5'-direction to yield nucleoside 5'-phosphates.. Functionally, bidirectionally degrades single-stranded DNA into large acid-insoluble oligonucleotides, which are then degraded further into small acid-soluble oligonucleotides. This chain is Exodeoxyribonuclease 7 large subunit, found in Mycobacterium sp. (strain KMS).